Reading from the N-terminus, the 1170-residue chain is MHRLRVLRHLKFCISTSHRTTVVLKNTRSFCNNIPSTSFASEAAAKYEKKSPTEHVLLRPDTYIGGVAMREDQIIWLRDSENRKMIAKEVTYPPGLLKIFDEILVNAADNKARDSSMNRLEVWLDRETARISVWNNGSGLPVEIHPTEGIYVPTLVFGNLFTSSNYDDSEIKTVGGRNGYGAKLCNIFSKEFIVETVDTRIKRRFRQKWYDNMKKCNEAEVVEILDETVKDYTKVEFVPDLERFQIDKLSDDVIDLIGRRVFEVAATLPRDVDVYLNGQKCDVDGFEDYVKMFNDSSSLLFLHPTPRWHVGVAKRNNFFGESHVVLPKIVSFVNNINTEKGGSHVDYVMDKIVNIIKPIVDSKLGDPTKSVKPAVIKNNLSIFINCLIENPSFESQTKETLTTKAKNFGSIFECDAKKTAEWAEQSGLIEDIVEEVLNMKKKKLPGKRVSVSSVRDIVKLEDAEWAGITGTAEKCTLILTEGDSAKALALAGLEVLGRETYGVFPLKGKLLNVSNLDDARASKNEEISNLLRILGLKFEDSNSITRESLRYGRLLILADQDEDGSHIKGLIVNFIHKFWPSLVHTDGFIQSFRTPLLKAKKGDKVRSFFSMNEYRKWADVEEGGKWKIKYYKGLGTSTSNEAREYFSDLDHHTVNFKYTGTTDDDAIRMAFDRDKSDERKEWIRRSENEITNEDDGKTEISYQEFVDGQLMQFGMVDLKRSIPSLIDGLKPSQRKILWTLLNNMDESTEIKVSQLAGAVAHRQSYHHGEESLVRTIIRMGQTFCGSSNLPLLQPIGQFGTRHEGGNDAASARYIFTALAPTTRLLFPQADDDLLQKNVEEGMVVEPTWLCPIVPLILINGTEGIGTGWSTKIANRNPIDIIDMIRRKIDSISTEYEIPPFYEEFRGKLEVVTPTKFISSGKIQLIRPERKNASTFSIEIVELPIGIWTSKYKEKLSKIVETLPVLEFSERHTEKRVHFRITLDRKKSSRFLQKSNSDLLNYFKLRTSLTENRVLFDRNGELKEFGNISEIAAEFFEVRRDLYEKRLKIQKEECEAKLIYVENQLNFIEMVTNGTIEIRSMGRNQLEEKLQEMGFRVDPMATIAKNSKKANYGYLLEMPVSRLTSDEMKRLEERKSRRRTELEAAESADWKSVWRSELDKLAEAVGNNRKS.

ATP contacts are provided by residues asparagine 106, asparagine 135, 163–165, 176–183, and 396–398; these read SSN, GRNGYGAK, and QTK. In terms of domain architecture, Toprim spans 475-590; that stretch reads CTLILTEGDS…SLVHTDGFIQ (116 aa). Mg(2+)-binding residues include glutamate 481, aspartate 559, and aspartate 561. In terms of domain architecture, Topo IIA-type catalytic spans 722-1157; sequence IPSLIDGLKP…DWKSVWRSEL (436 aa). The active-site O-(5'-phospho-DNA)-tyrosine intermediate is tyrosine 813.

This sequence belongs to the type II topoisomerase family. In terms of assembly, homodimer. Requires Mg(2+) as cofactor. The cofactor is Mn(2+). It depends on Ca(2+) as a cofactor.

Its subcellular location is the mitochondrion. The enzyme catalyses ATP-dependent breakage, passage and rejoining of double-stranded DNA.. Control of topological states of DNA by transient breakage and subsequent rejoining of DNA strands. Topoisomerase II makes double-strand breaks. The protein is Putative DNA topoisomerase 2, mitochondrial of Caenorhabditis elegans.